The following is a 183-amino-acid chain: uncharacterized protein (183 aa).

This sequence to A.muscaria DOPA 4,5-dioxygenase.

This is an uncharacterized protein from Botryotinia fuckeliana (Noble rot fungus).